Consider the following 185-residue polypeptide: Large ribosomal subunit protein uL5 (185 aa).

This sequence belongs to the universal ribosomal protein uL5 family. Part of the 50S ribosomal subunit; part of the 5S rRNA/L5/L18/L25 subcomplex. Contacts the 5S rRNA and the P site tRNA. Forms a bridge to the 30S subunit in the 70S ribosome.

This is one of the proteins that bind and probably mediate the attachment of the 5S RNA into the large ribosomal subunit, where it forms part of the central protuberance. In the 70S ribosome it contacts protein S13 of the 30S subunit (bridge B1b), connecting the 2 subunits; this bridge is implicated in subunit movement. Contacts the P site tRNA; the 5S rRNA and some of its associated proteins might help stabilize positioning of ribosome-bound tRNAs. This Phocaeicola vulgatus (strain ATCC 8482 / DSM 1447 / JCM 5826 / CCUG 4940 / NBRC 14291 / NCTC 11154) (Bacteroides vulgatus) protein is Large ribosomal subunit protein uL5.